The chain runs to 338 residues: Fructose-1,6-bisphosphatase class 1 1 (338 aa).

Mg(2+)-binding residues include glutamate 94, aspartate 116, leucine 118, and aspartate 119. Substrate is bound by residues 119–122 (DGSS), asparagine 210, and lysine 276. Glutamate 282 provides a ligand contact to Mg(2+).

Belongs to the FBPase class 1 family. As to quaternary structure, homotetramer. It depends on Mg(2+) as a cofactor.

Its subcellular location is the cytoplasm. The catalysed reaction is beta-D-fructose 1,6-bisphosphate + H2O = beta-D-fructose 6-phosphate + phosphate. It functions in the pathway carbohydrate biosynthesis; gluconeogenesis. This is Fructose-1,6-bisphosphatase class 1 1 from Paraburkholderia xenovorans (strain LB400).